The sequence spans 276 residues: Elongation factor Ts, mitochondrial (276 aa).

The protein belongs to the EF-Ts family.

The protein resides in the mitochondrion. Its function is as follows. Associates with the EF-Tu.GDP complex and induces the exchange of GDP to GTP. It remains bound to the aminoacyl-tRNA.EF-Tu.GTP complex up to the GTP hydrolysis stage on the ribosome. The polypeptide is Elongation factor Ts, mitochondrial (Leishmania major).